The primary structure comprises 378 residues: Cytochrome b (378 aa).

Helical transmembrane passes span 34-54, 78-99, 114-134, and 179-199; these read FGSLLGLCLIIQILTGLFLAM, WFLRICHANGASFFFACLFIHV, WMIGVIILFMVMATGFLGYVL, and FFTFHFILPFIVLALTMIHLL. Positions 84 and 98 each coordinate heme b. Heme b-binding residues include H183 and H197. Residue H202 coordinates a ubiquinone. Transmembrane regions (helical) follow at residues 227–247, 289–309, 321–341, and 348–368; these read YKDIVGFIIFMWILIGFIWKF, LGGVIALVLSIAILMILPFTH, LNQILFWNMVIVASLLTWIGA, and YVLTGQILTVLYFSYFIINPL.

Belongs to the cytochrome b family. The main subunits of complex b-c1 are: cytochrome b, cytochrome c1 and the Rieske protein. It depends on heme b as a cofactor.

The protein resides in the mitochondrion inner membrane. Its function is as follows. Component of the ubiquinol-cytochrome c reductase complex (complex III or cytochrome b-c1 complex) that is part of the mitochondrial respiratory chain. The b-c1 complex mediates electron transfer from ubiquinol to cytochrome c. Contributes to the generation of a proton gradient across the mitochondrial membrane that is then used for ATP synthesis. In Aedes aegypti (Yellowfever mosquito), this protein is Cytochrome b.